The following is a 134-amino-acid chain: Perlwapin (134 aa).

3 consecutive WAP domains span residues 2 to 45 (GPNL…CVPK), 46 to 89 (PKPG…YRPE), and 90 to 132 (KPGS…EKPC). 12 cysteine pairs are disulfide-bonded: Cys8/Cys34, Cys17/Cys38, Cys21/Cys33, Cys27/Cys42, Cys51/Cys77, Cys59/Cys82, Cys64/Cys76, Cys70/Cys85, Cys94/Cys121, Cys104/Cys124, Cys108/Cys120, and Cys114/Cys128.

Nacreous layer of shell.

In terms of biological role, inhibits growth of calcium carbonate crystals. May inhibit growth of certain crystallographic planes in the mineral phase of nacre in the shell. The chain is Perlwapin from Haliotis laevigata (Smooth Australian abalone).